The chain runs to 1518 residues: Hormone receptor 4 (1518 aa).

Disordered regions lie at residues 30–50 (RCSSDGESIADTSTSSPDLLA), 145–327 (TSST…KLSE), 380–587 (PSRI…QPQA), 672–820 (VGVG…SSVA), and 887–913 (SSNSTGLGGVGGGMGGRNLEAPHEPTD). Positions 34–46 (DGESIADTSTSSP) are enriched in polar residues. Composition is skewed to low complexity over residues 145 to 189 (TSST…SSSG) and 208 to 219 (SSSSAISAAAAS). Gly residues predominate over residues 238-260 (EGGGPAGDGSGATGGGNTSGGST). Over residues 291–323 (STTTTTGRPTLTPTNGVLSSASAGTGISTGSSA) the composition is skewed to low complexity. Over residues 400–429 (QRERERERDRERDRERERERDRDREREREQ) the composition is skewed to basic and acidic residues. Composition is skewed to polar residues over residues 430–451 (SISSSQQHLSRVSASPPTQLSH) and 475–489 (RKSSPPTEHLLSQSM). Composition is skewed to low complexity over residues 490-529 (QHLTQQQAIHLHHLLGQQQQQQQASHPQQQQQQQHSPHSL), 546-586 (HHQQ…QQPQ), 681-705 (GSVQCPSPHPSSSSSSSQLSPQTPS), and 738-799 (GQSH…PSSS). Composition is skewed to gly residues over residues 800-812 (SGGGSVSGGGVGG) and 892-902 (GLGGVGGGMGG). The nuclear receptor DNA-binding region spans 918-993 (PLVCMICEDK…QGMVLQAVRE (76 aa)). NR C4-type zinc fingers lie at residues 921-941 (CMICEDKATGLHYGIITCEGC) and 957-976 (CVADGTCEITKAQRNRCQYC). Disordered regions lie at residues 1015-1101 (KHKK…AAVA), 1142-1210 (LLQA…LPPH), and 1341-1371 (KRRGEGGGSRHGSPASTPLSTPTGTPLSTPI). The span at 1021-1060 (QKQQQQAAQQQQQQAAAQQQHQQQQQHQQHQQHQQQQLHS) shows a compositional bias: low complexity. The segment covering 1061–1077 (PLHHHHHQGHQSHHAQQ) has biased composition (basic residues). Low complexity-rich tracts occupy residues 1078–1101 (QHHPQLSPHHLLSPQQQQLAAAVA) and 1144–1193 (QAPP…HHQQ). Positions 1194 to 1205 (QGGGGGGAGGGA) are enriched in gly residues. The NR LBD domain occupies 1250–1518 (HALGMIQTLI…PFVLNSASIR (269 aa)). Residues 1351–1368 (HGSPASTPLSTPTGTPLS) are compositionally biased toward low complexity.

The protein belongs to the nuclear hormone receptor family. NR1 subfamily. As to expression, during L2 and L3 stages, strong constitutive expression is seen in the ring gland. Lower expression is detected in specific neurons of the central nervous system (CNS) (at protein level).

The protein resides in the nucleus. Functionally, coordinates growth and maturation by mediating endocrine responses to the attainment of critical weight during larval development. Plays a central role in the genetic cascades triggered by the steroid hormone ecdysone at the onset of metamorphosis, acting as both a repressor of the early ecdysone-induced regulatory genes and an inducer of the ftz-f1 midprepupal competence factor. The chain is Hormone receptor 4 (Hr4) from Drosophila melanogaster (Fruit fly).